The primary structure comprises 373 residues: Velvet complex subunit RYP3 (373 aa).

Basic and acidic residues predominate over residues 1-10; sequence MYTLKQDRPH. Disordered stretches follow at residues 1-26 and 344-373; these read MYTL…LQHG and RKDG…ENEG. The 297-residue stretch at 48-344 folds into the Velvet domain; that stretch reads VYEGRIYSLD…AFQGIKIPIR (297 aa). Residues 364–373 show a composition bias toward acidic residues; that stretch reads GEGEDWENEG.

This sequence belongs to the velvet family. VelB subfamily. As to quaternary structure, component of the heterotrimeric velvet complex composed of LAE1, VEL1 and VEL2; VEL1A acting as a bridging protein between LAE1 and VEL2. Forms a heterodimeric complex with VOS1; the formation of the VEL2-VOS1 complex is light-dependent.

Its subcellular location is the nucleus. The protein localises to the cytoplasm. Its function is as follows. Component of the velvet transcription factor complex that controls sexual/asexual developmental ratio in response to light, promoting sexual development in the darkness while stimulating asexual sporulation under illumination. The velvet complex acts as a global regulator for secondary metabolite gene expression. Component of the RYP2-RYP3 heterodimeric complex that plays a dual role in activating genes associated with spore maturation and repressing certain development-associated genes. The complex binds DNA through the DNA-binding domain of RYP2 that recognizes an 11-nucleotide consensus sequence 5'-CTGGCCGCGGC-3' consisting of two motifs in the promoters of key developmental regulatory genes. Required for viable spore production and regulation of sporulation in response to temperature, as well as for the switch to yeast-form in the presence of host cells. The sequence is that of Velvet complex subunit RYP3 (RYP3) from Ajellomyces capsulatus (Darling's disease fungus).